The sequence spans 886 residues: Alanine--tRNA ligase (886 aa).

The Zn(2+) site is built by histidine 570, histidine 574, cysteine 673, and histidine 677.

It belongs to the class-II aminoacyl-tRNA synthetase family. Zn(2+) is required as a cofactor.

The protein localises to the cytoplasm. The enzyme catalyses tRNA(Ala) + L-alanine + ATP = L-alanyl-tRNA(Ala) + AMP + diphosphate. Catalyzes the attachment of alanine to tRNA(Ala) in a two-step reaction: alanine is first activated by ATP to form Ala-AMP and then transferred to the acceptor end of tRNA(Ala). Also edits incorrectly charged Ser-tRNA(Ala) and Gly-tRNA(Ala) via its editing domain. The protein is Alanine--tRNA ligase of Chlorobium chlorochromatii (strain CaD3).